The chain runs to 119 residues: Ig heavy chain V region X44 (119 aa).

The region spanning 1–117 (EVKLLESGGG…WGQGTLVTVS (117 aa)) is the Ig-like domain.

The sequence is that of Ig heavy chain V region X44 from Mus musculus (Mouse).